The chain runs to 242 residues: Caffeoyl-CoA O-methyltransferase (242 aa).

Residue K16 participates in substrate binding. S-adenosyl-L-methionine contacts are provided by residues T58, E80, G82 to V83, S88, D106, and A135. D158 serves as a coordination point for substrate. D158 serves as a coordination point for a divalent metal cation. D160 contributes to the S-adenosyl-L-methionine binding site. A divalent metal cation contacts are provided by D184 and N185. N189 contributes to the substrate binding site.

Belongs to the class I-like SAM-binding methyltransferase superfamily. Cation-dependent O-methyltransferase family. CCoAMT subfamily. A divalent metal cation is required as a cofactor.

The catalysed reaction is (E)-caffeoyl-CoA + S-adenosyl-L-methionine = (E)-feruloyl-CoA + S-adenosyl-L-homocysteine + H(+). It functions in the pathway aromatic compound metabolism; phenylpropanoid biosynthesis. Its function is as follows. Methylates caffeoyl-CoA to feruloyl-CoA and 5-hydroxyferuloyl-CoA to sinapoyl-CoA. Plays a role in the synthesis of feruloylated polysaccharides. Involved in the reinforcement of the plant cell wall. Also involved in the responding to wounding or pathogen challenge by the increased formation of cell wall-bound ferulic acid polymers. The protein is Caffeoyl-CoA O-methyltransferase (CCOAOMT) of Solanum tuberosum (Potato).